The primary structure comprises 449 residues: Tubulin beta-8 chain (449 aa).

GTP-binding residues include Q11, E69, S138, G142, T143, G144, N204, and N226. E69 serves as a coordination point for Mg(2+). A disordered region spans residues 428 to 449; sequence ATADEEEGYEYEEDEVEVQEEQ. Residues 429-449 are compositionally biased toward acidic residues; the sequence is TADEEEGYEYEEDEVEVQEEQ.

Belongs to the tubulin family. As to quaternary structure, dimer of alpha and beta chains. A typical microtubule is a hollow water-filled tube with an outer diameter of 25 nm and an inner diameter of 15 nM. Alpha-beta heterodimers associate head-to-tail to form protofilaments running lengthwise along the microtubule wall with the beta-tubulin subunit facing the microtubule plus end conferring a structural polarity. Microtubules usually have 13 protofilaments but different protofilament numbers can be found in some organisms and specialized cells. It depends on Mg(2+) as a cofactor.

Its subcellular location is the cytoplasm. It is found in the cytoskeleton. Its function is as follows. Tubulin is the major constituent of microtubules, a cylinder consisting of laterally associated linear protofilaments composed of alpha- and beta-tubulin heterodimers. Microtubules grow by the addition of GTP-tubulin dimers to the microtubule end, where a stabilizing cap forms. Below the cap, tubulin dimers are in GDP-bound state, owing to GTPase activity of alpha-tubulin. This is Tubulin beta-8 chain (TUBB8) from Arabidopsis thaliana (Mouse-ear cress).